The chain runs to 156 residues: UPF0232 protein BL0636 (156 aa).

It belongs to the UPF0232 family.

The sequence is that of UPF0232 protein BL0636 from Bifidobacterium longum (strain NCC 2705).